Here is a 588-residue protein sequence, read N- to C-terminus: Histone deacetylase 9 (588 aa).

Position 22 is a phosphoserine (S22). Positions P23–R27 are interaction with CTBP1. The segment covering R110–L147 has biased composition (basic and acidic residues). Disordered regions lie at residues R110–G170, T183–L242, and S264–E301. Residues R136 to K154 form an interaction with MEF2 region. 2 stretches are compositionally biased toward polar residues: residues K154–N166 and L185–Y199. The tract at residues L175–A343 is interaction with MAPK10. A compositionally biased stretch (basic and acidic residues) spans D208 to A219. Residues T218–V261 are interaction with ETV6. S220 is modified (phosphoserine). Residues K233 to L242 are compositionally biased toward basic and acidic residues. S240 carries the phosphoserine; by DYRK1B modification. Residues S264 to G284 show a composition bias toward low complexity. Phosphoserine is present on S450. The disordered stretch occupies residues Q493 to V533. Residues M514–A525 show a composition bias toward basic and acidic residues. S552 is modified (phosphoserine).

This sequence belongs to the histone deacetylase family. HD type 2 subfamily. As to quaternary structure, homodimer. Interacts with ETV6. Interacts with MEF2, HDAC1, HDAC3, HDAC4, HDAC5, CTBP1 and MAPK10. The phosphorylated form interacts with 14-3-3. Interacts with FOXP3 in the absence of T-cell stimulation. Post-translationally, sumoylated. In terms of processing, phosphorylated on Ser-220 and Ser-450; which promotes 14-3-3-binding, impairs interaction with MEF2, and antagonizes antimyogenic activity. Phosphorylated on Ser-240 by DYRK1B; which impairs nuclear accumulation. Phosphorylated by the PKC kinases PKN1 and PKN2, impairing nuclear import. As to expression, expressed at high levels in heart, brain and spleen. Expressed in skeletal muscle.

The protein resides in the nucleus. It catalyses the reaction N(6)-acetyl-L-lysyl-[histone] + H2O = L-lysyl-[histone] + acetate. Its function is as follows. Devoided of intrinsic deacetylase activity, promotes the deacetylation of lysine residues on the N-terminal part of the core histones (H2A, H2B, H3 and H4) by recruiting HDAC1 and HDAC3. Histone deacetylation gives a tag for epigenetic repression and plays an important role in transcriptional regulation, cell cycle progression and developmental events. Represses MEF2-dependent transcription, inhibits skeletal myogenesis and may be involved in heart development. Protects neurons from apoptosis, both by inhibiting JUN phosphorylation by MAPK10 and by repressing JUN transcription via HDAC1 recruitment to JUN promoter. The protein is Histone deacetylase 9 (Hdac9) of Mus musculus (Mouse).